The following is a 280-amino-acid chain: UPF0276 protein NMA0228 (280 aa).

Belongs to the UPF0276 family.

The polypeptide is UPF0276 protein NMA0228 (Neisseria meningitidis serogroup A / serotype 4A (strain DSM 15465 / Z2491)).